Consider the following 343-residue polypeptide: Heat-inducible transcription repressor HrcA (343 aa).

The protein belongs to the HrcA family.

Functionally, negative regulator of class I heat shock genes (grpE-dnaK-dnaJ and groELS operons). Prevents heat-shock induction of these operons. This Mycolicibacterium paratuberculosis (strain ATCC BAA-968 / K-10) (Mycobacterium paratuberculosis) protein is Heat-inducible transcription repressor HrcA.